A 45-amino-acid polypeptide reads, in one-letter code: Pseudo-hevein (45 aa).

One can recognise a Chitin-binding type-1 domain in the interval 1–43; the sequence is EQCGRQAGGKLCPNNLCCSQYGWCGSSDDYCSPSKNCQSNCKG. Intrachain disulfides connect C3/C18, C12/C24, C17/C31, and C37/C41.

N-acetyl-D-glucosamine / N-acetyl-D-neuraminic acid binding lectin. Can inhibit fungal growth. This chain is Pseudo-hevein, found in Hevea brasiliensis (Para rubber tree).